The primary structure comprises 808 residues: Probable mannosyl-oligosaccharide glucosidase (808 aa).

The Cytoplasmic segment spans residues 1–11 (MVSDMLGGNKR). Residues 12–31 (WILFGLLSFLLNCVLVSCSV) traverse the membrane as a helical; Signal-anchor for type II membrane protein segment. Residues 32–808 (EDIEKAANDS…LVVNIMSENY (777 aa)) lie on the Lumenal side of the membrane. N-linked (GlcNAc...) asparagine glycosylation is present at Asn39. The Proton donor role is filled by Asp580. Catalysis depends on Glu778, which acts as the Proton acceptor.

It belongs to the glycosyl hydrolase 63 family.

The protein localises to the endoplasmic reticulum membrane. It carries out the reaction N(4)-(alpha-D-Glc-(1-&gt;2)-alpha-D-Glc-(1-&gt;3)-alpha-D-Glc-(1-&gt;3)-alpha-D-Man-(1-&gt;2)-alpha-D-Man-(1-&gt;2)-alpha-D-Man-(1-&gt;3)-[alpha-D-Man-(1-&gt;2)-alpha-D-Man-(1-&gt;3)-[alpha-D-Man-(1-&gt;2)-alpha-D-Man-(1-&gt;6)]-alpha-D-Man-(1-&gt;6)]-beta-D-Man-(1-&gt;4)-beta-D-GlcNAc-(1-&gt;4)-beta-D-GlcNAc)-L-asparaginyl-[protein] + H2O = N(4)-(alpha-D-Glc-(1-&gt;3)-alpha-D-Glc-(1-&gt;3)-alpha-D-Man-(1-&gt;2)-alpha-D-Man-(1-&gt;2)-alpha-D-Man-(1-&gt;3)-[alpha-D-Man-(1-&gt;2)-alpha-D-Man-(1-&gt;3)-[alpha-D-Man-(1-&gt;2)-alpha-D-Man-(1-&gt;6)]-alpha-D-Man-(1-&gt;6)]-beta-D-Man-(1-&gt;4)-beta-D-GlcNAc-(1-&gt;4)-beta-D-GlcNAc)-L-asparaginyl-[protein] + beta-D-glucose. Cleaves the distal alpha 1,2-linked glucose residue from the Glc(3)Man(9)GlcNAc(2) oligosaccharide precursor highly specifically. The chain is Probable mannosyl-oligosaccharide glucosidase from Schizosaccharomyces pombe (strain 972 / ATCC 24843) (Fission yeast).